Reading from the N-terminus, the 414-residue chain is Lipoyl synthase, mitochondrial (414 aa).

A mitochondrion-targeting transit peptide spans 1-31; the sequence is MAVSTSHFRSLCASRPLSRTAIVGHISCRSY. The tract at residues 31–51 is disordered; that stretch reads YATTEPSPSATSTSTTTTARR. Positions 32 to 48 are enriched in low complexity; the sequence is ATTEPSPSATSTSTTTT. 7 residues coordinate [4Fe-4S] cluster: Cys131, Cys136, Cys142, Cys162, Cys166, Cys169, and Ser377. Residues 145 to 366 enclose the Radical SAM core domain; sequence GSDKSAATAT…RQRALDMGFL (222 aa).

It belongs to the radical SAM superfamily. Lipoyl synthase family. [4Fe-4S] cluster is required as a cofactor.

It localises to the mitochondrion. The catalysed reaction is [[Fe-S] cluster scaffold protein carrying a second [4Fe-4S](2+) cluster] + N(6)-octanoyl-L-lysyl-[protein] + 2 oxidized [2Fe-2S]-[ferredoxin] + 2 S-adenosyl-L-methionine + 4 H(+) = [[Fe-S] cluster scaffold protein] + N(6)-[(R)-dihydrolipoyl]-L-lysyl-[protein] + 4 Fe(3+) + 2 hydrogen sulfide + 2 5'-deoxyadenosine + 2 L-methionine + 2 reduced [2Fe-2S]-[ferredoxin]. It participates in protein modification; protein lipoylation via endogenous pathway; protein N(6)-(lipoyl)lysine from octanoyl-[acyl-carrier-protein]: step 2/2. Catalyzes the radical-mediated insertion of two sulfur atoms into the C-6 and C-8 positions of the octanoyl moiety bound to the lipoyl domains of lipoate-dependent enzymes, thereby converting the octanoylated domains into lipoylated derivatives. The protein is Lipoyl synthase, mitochondrial of Aspergillus fumigatus (strain CBS 144.89 / FGSC A1163 / CEA10) (Neosartorya fumigata).